Here is a 326-residue protein sequence, read N- to C-terminus: ATP synthase subunit gamma, mitochondrial (326 aa).

Residues 1–45 constitute a mitochondrion transit peptide; that stretch reads MAMAALRREGRRLAAAPFTSPTPLNALRSSLVSPSEEIGLSGVRS.

This sequence belongs to the ATPase gamma chain family. As to quaternary structure, F-type ATPases have 2 components, CF(1) - the catalytic core - and CF(0) - the membrane proton channel. CF(1) has five subunits: alpha(3), beta(3), gamma(1), delta(1), epsilon(1). CF(0) has three main subunits: a, b and c.

It localises to the mitochondrion. The protein resides in the mitochondrion inner membrane. In terms of biological role, mitochondrial membrane ATP synthase (F(1)F(0) ATP synthase or Complex V) produces ATP from ADP in the presence of a proton gradient across the membrane which is generated by electron transport complexes of the respiratory chain. F-type ATPases consist of two structural domains, F(1) - containing the extramembraneous catalytic core, and F(0) - containing the membrane proton channel, linked together by a central stalk and a peripheral stalk. During catalysis, ATP synthesis in the catalytic domain of F(1) is coupled via a rotary mechanism of the central stalk subunits to proton translocation. Part of the complex F(1) domain and the central stalk which is part of the complex rotary element. The gamma subunit protrudes into the catalytic domain formed of alpha(3)beta(3). Rotation of the central stalk against the surrounding alpha(3)beta(3) subunits leads to hydrolysis of ATP in three separate catalytic sites on the beta subunits. The polypeptide is ATP synthase subunit gamma, mitochondrial (ATPC) (Ipomoea batatas (Sweet potato)).